The primary structure comprises 534 residues: Cytochrome P450 monooxygenase btcB (534 aa).

An N-linked (GlcNAc...) asparagine glycan is attached at Asn20. Residues 41-61 (ALAFLCGALLFGFVYSVFYNL) form a helical membrane-spanning segment. Asn335, Asn413, and Asn431 each carry an N-linked (GlcNAc...) asparagine glycan. Cys484 contributes to the heme binding site.

Belongs to the cytochrome P450 family. Heme is required as a cofactor.

It localises to the membrane. Its pathway is secondary metabolite biosynthesis; terpenoid biosynthesis. In terms of biological role, cytochrome P4590 monooxygenase part of the gene cluster that mediates the biosynthesis of betaestacins. The bifunctional terpene synthase btcA converts isopentenyl diphosphate (IPP) and dimethylallyl diphosphate (DMAPP) into the sesterterpene betaestacin I. The C-terminal prenyltransferase (PT) domain of btcA catalyzes formation of GFPP, whereas the N-terminal terpene cyclase (TC) domain catalyzes the cyclization of GFPP into betaestacin I. The cytochrome P450 monooxygenase btcB oxidizes the C25 methyl group of betaestacin I to yield the carboxylic acid betaestacin IV via the alcohol betaestacin III. The cytochrome P450 monooxygenase btcC further catalyzes the multistep oxidation of betaestacin IV to produce several compounds, including betaestacins Va, Vb, Vc and VI. The protein is Cytochrome P450 monooxygenase btcB of Colletotrichum orbiculare (strain 104-T / ATCC 96160 / CBS 514.97 / LARS 414 / MAFF 240422) (Cucumber anthracnose fungus).